A 268-amino-acid polypeptide reads, in one-letter code: ELL-associated factor 1 (268 aa).

The interval 106–268 is disordered; it reads IQVKKTRAEG…LSESGSDSDD (163 aa). A compositionally biased stretch (pro residues) spans 128 to 154; it reads ARPPQPSQPPPPPPPMPFRAPTKPPAG. S165 carries the post-translational modification Phosphoserine. Over residues 171–181 the composition is skewed to basic and acidic residues; that stretch reads DDIKRELRAEV. The segment at 182–262 is necessary for transactivation activity; that stretch reads DIIEQMSSSS…LRNDLQLSES (81 aa). Over residues 188-203 the composition is skewed to low complexity; sequence SSSSGSSSSDSESSSG. Residues 238-268 are compositionally biased toward polar residues; sequence NGTSRPQGSSQLMNTLRNDLQLSESGSDSDD.

Belongs to the EAF family. In terms of assembly, component of the super elongation complex (SEC), at least composed of EAF1, EAF2, CDK9, MLLT3/AF9, AFF (AFF1 or AFF4), the P-TEFb complex and ELL (ELL, ELL2 or ELL3). Interacts with ELL and ELL2.

It is found in the nucleus speckle. The protein localises to the nucleus. It localises to the cajal body. In terms of biological role, acts as a transcriptional transactivator of ELL and ELL2 elongation activities. The polypeptide is ELL-associated factor 1 (Eaf1) (Mus musculus (Mouse)).